Consider the following 337-residue polypeptide: Biotin synthase (337 aa).

Residues 55–284 enclose the Radical SAM core domain; it reads YFKNTIELCS…KKTILLAGGK (230 aa). 3 residues coordinate [4Fe-4S] cluster: Cys73, Cys77, and Cys80. 3 residues coordinate [2Fe-2S] cluster: Cys117, Cys149, and Cys209.

It belongs to the radical SAM superfamily. Biotin synthase family. Homodimer. [4Fe-4S] cluster serves as cofactor. Requires [2Fe-2S] cluster as cofactor.

It carries out the reaction (4R,5S)-dethiobiotin + (sulfur carrier)-SH + 2 reduced [2Fe-2S]-[ferredoxin] + 2 S-adenosyl-L-methionine = (sulfur carrier)-H + biotin + 2 5'-deoxyadenosine + 2 L-methionine + 2 oxidized [2Fe-2S]-[ferredoxin]. It participates in cofactor biosynthesis; biotin biosynthesis; biotin from 7,8-diaminononanoate: step 2/2. Catalyzes the conversion of dethiobiotin (DTB) to biotin by the insertion of a sulfur atom into dethiobiotin via a radical-based mechanism. This Caldicellulosiruptor bescii (strain ATCC BAA-1888 / DSM 6725 / KCTC 15123 / Z-1320) (Anaerocellum thermophilum) protein is Biotin synthase.